Consider the following 354-residue polypeptide: Falstatin (354 aa).

Residues 1-21 (MKSITFFVFNICSILALLSHC) form the signal peptide. The BC loop; binds and inhibits the active site cavity of cysteine proteases motif lies at 226 to 236 (LEGNAGTGYLW). The segment at 274 to 317 (KYKIDEHDSSKNVNREIESPEQKESDSKPKKPQMQLLGGPDRMR) is disordered. Residues 275 to 302 (YKIDEHDSSKNVNREIESPEQKESDSKP) show a composition bias toward basic and acidic residues.

Belongs to the protease inhibitor I71 family. Oligomer; probably composed of 10 monomers. Post-translationally, during the liver stage, proteolytically cleaved.

It is found in the secreted. The protein localises to the cytoplasmic vesicle. Its subcellular location is the secretory vesicle. It localises to the microneme. The protein resides in the host cytoplasm. It is found in the parasitophorous vacuole lumen. In terms of biological role, cysteine protease inhibitor. Required for the invasion of host erythrocytes by merozoites. In the mosquito vector, essential for the gliding motility of hemocoel sporozoites and, therefore, for salivary gland invasion and the subsequent transmission from the mosquito to the mammalian host. Required for the invasion of host hepatocytes. During the liver stage, may prevent host hepatocyte cell death likely by inhibiting host cysteine proteases. The chain is Falstatin from Plasmodium berghei (strain Anka).